A 562-amino-acid chain; its full sequence is Glucose-6-phosphate isomerase (562 aa).

The active-site Proton donor is E370. Active-site residues include H401 and K526.

This sequence belongs to the GPI family.

Its subcellular location is the cytoplasm. It carries out the reaction alpha-D-glucose 6-phosphate = beta-D-fructose 6-phosphate. Its pathway is carbohydrate biosynthesis; gluconeogenesis. It functions in the pathway carbohydrate degradation; glycolysis; D-glyceraldehyde 3-phosphate and glycerone phosphate from D-glucose: step 2/4. In terms of biological role, catalyzes the reversible isomerization of glucose-6-phosphate to fructose-6-phosphate. This chain is Glucose-6-phosphate isomerase, found in Deinococcus geothermalis (strain DSM 11300 / CIP 105573 / AG-3a).